We begin with the raw amino-acid sequence, 291 residues long: Tyrosine isonitrile desaturase (291 aa).

Fe cation contacts are provided by H110, D112, and H259.

This sequence belongs to the TfdA dioxygenase family. As to quaternary structure, homotrimer in solution. Fe(2+) is required as a cofactor.

The enzyme catalyses (2S)-3-(4-hydroxyphenyl)-2-isocyanopropanoate + 2-oxoglutarate + O2 = (2E)-3-(4-hydroxyphenyl)-2-isocyanoprop-2-enoate + succinate + CO2 + H2O. Functionally, involved in the biosynthesis of paerucumarin, a cyclized isocyano derivative of tyrosine. Catalyzes the 2-oxoglutarate-dependent oxidation of tyrosine isonitrile. The polypeptide is Tyrosine isonitrile desaturase (Pseudomonas aeruginosa (strain ATCC 15692 / DSM 22644 / CIP 104116 / JCM 14847 / LMG 12228 / 1C / PRS 101 / PAO1)).